Here is a 313-residue protein sequence, read N- to C-terminus: Bifunctional pinoresinol-lariciresinol reductase 1 (313 aa).

NADP(+) is bound by residues 11-17 (GGTGYIG), arginine 36, and lysine 45. Lysine 138 functions as the Proton acceptor in the catalytic mechanism. Residue arginine 142 participates in NADP(+) binding. Histidine 271 is a binding site for substrate.

Belongs to the NmrA-type oxidoreductase family. Isoflavone reductase subfamily. In terms of assembly, dimer.

It catalyses the reaction (+)-lariciresinol + NADP(+) = (+)-pinoresinol + NADPH + H(+). The enzyme catalyses (-)-lariciresinol + NADP(+) = (-)-pinoresinol + NADPH + H(+). The catalysed reaction is (+)-secoisolariciresinol + NADP(+) = (-)-lariciresinol + NADPH + H(+). In terms of biological role, reductase involved in lignan biosynthesis. Catalyzes the enantioselective sequential conversion of (-)-pinoresinol into (-)-lariciresinol and of (-)-lariciresinol into (+)-secoisolariciresinol. Can also convert with a lower efficiency (+)-pinoresinol into (+)-lariciresinol, but not (+)-lariciresinol into (-)-secoisolariciresinol. Abstracts the 4R-hydride from the NADPH cofactor during catalysis. This is Bifunctional pinoresinol-lariciresinol reductase 1 (PLR_Tp1) from Thuja plicata (Western red-cedar).